Reading from the N-terminus, the 172-residue chain is Centrin-2 (172 aa).

A disordered region spans residues Met1–Lys30. Ala2 carries the post-translational modification N-acetylalanine. The segment at Ala2 to Leu25 is required for self-assembly. The residue at position 20 (Ser20) is a Phosphoserine. Residue Lys22 forms a Glycyl lysine isopeptide (Lys-Gly) (interchain with G-Cter in SUMO2) linkage. Position 26 is a phosphothreonine (Thr26). EF-hand domains are found at residues Glu28–Glu63, Pro64–Glu99, Asp101–Asn136, and Leu137–Tyr172. Residues Asp41, Asp43, Thr45, Thr47, and Glu52 each contribute to the Ca(2+) site. Ca(2+) is bound by residues Asp150, Asp152, Asp154, Glu156, and Glu161.

This sequence belongs to the centrin family. As to quaternary structure, monomer. Homooligomer. Interacts with SFI1. Interacts with CCP110. Component of the XPC complex composed of XPC, RAD23B and CETN2. Component of the nuclear pore complex (NPC)-associated TREX-2 complex (transcription and export complex 2), composed of at least GANP, 2 copies of ENY2, PCID2, SEM1/DSS1, and either centrin CETN2 or centrin CETN3. The TREX-2 complex also associates with ALYREF/ALY and with the nucleoporin NUP153. Interacts with USP49. Forms a microtubule-associated complex with POC5, POC1B and FAM161A. Interacts with CCDC15.

It localises to the cytoplasm. The protein localises to the cytoskeleton. The protein resides in the microtubule organizing center. It is found in the centrosome. Its subcellular location is the centriole. It localises to the nucleus envelope. The protein localises to the nucleus. The protein resides in the nuclear pore complex. In terms of biological role, plays a fundamental role in microtubule organizing center structure and function. Required for centriole duplication and correct spindle formation. Has a role in regulating cytokinesis and genome stability via cooperation with CALM1 and CCP110. Functionally, involved in global genome nucleotide excision repair (GG-NER) by acting as component of the XPC complex. Cooperatively with RAD23B appears to stabilize XPC. In vitro, stimulates DNA binding of the XPC:RAD23B dimer. Its function is as follows. The XPC complex is proposed to represent the first factor bound at the sites of DNA damage and together with other core recognition factors, XPA, RPA and the TFIIH complex, is part of the pre-incision (or initial recognition) complex. The XPC complex recognizes a wide spectrum of damaged DNA characterized by distortions of the DNA helix such as single-stranded loops, mismatched bubbles or single-stranded overhangs. The orientation of XPC complex binding appears to be crucial for inducing a productive NER. XPC complex is proposed to recognize and to interact with unpaired bases on the undamaged DNA strand which is followed by recruitment of the TFIIH complex and subsequent scanning for lesions in the opposite strand in a 5'-to-3' direction by the NER machinery. Cyclobutane pyrimidine dimers (CPDs) which are formed upon UV-induced DNA damage esacpe detection by the XPC complex due to a low degree of structural perurbation. Instead they are detected by the UV-DDB complex which in turn recruits and cooperates with the XPC complex in the respective DNA repair. As a component of the TREX-2 complex, involved in the export of mRNAs to the cytoplasm through the nuclear pores. The protein is Centrin-2 (CETN2) of Homo sapiens (Human).